A 112-amino-acid polypeptide reads, in one-letter code: Integration host factor subunit alpha (112 aa).

It belongs to the bacterial histone-like protein family. As to quaternary structure, heterodimer of an alpha and a beta chain.

This protein is one of the two subunits of integration host factor, a specific DNA-binding protein that functions in genetic recombination as well as in transcriptional and translational control. This chain is Integration host factor subunit alpha, found in Sinorhizobium fredii (strain NBRC 101917 / NGR234).